The primary structure comprises 259 residues: Ribosomal RNA small subunit methyltransferase J (259 aa).

Residues 101 to 102, 117 to 118, 153 to 154, and Asp176 each bind S-adenosyl-L-methionine; these read RD, ER, and SS.

The protein belongs to the methyltransferase superfamily. RsmJ family.

It is found in the cytoplasm. It carries out the reaction guanosine(1516) in 16S rRNA + S-adenosyl-L-methionine = N(2)-methylguanosine(1516) in 16S rRNA + S-adenosyl-L-homocysteine + H(+). In terms of biological role, specifically methylates the guanosine in position 1516 of 16S rRNA. The polypeptide is Ribosomal RNA small subunit methyltransferase J (Vibrio campbellii (strain ATCC BAA-1116)).